The following is a 340-amino-acid chain: 7,8-didemethyl-8-hydroxy-5-deazariboflavin synthase (340 aa).

The 232-residue stretch at 25-256 folds into the Radical SAM core domain; sequence ATYSPAYTIV…SDITIQIPPN (232 aa). The [4Fe-4S] cluster site is built by C39, C43, and C46.

It belongs to the radical SAM superfamily. CofG family. Consists of two subunits, CofG and CofH. Requires [4Fe-4S] cluster as cofactor.

The enzyme catalyses 5-amino-5-(4-hydroxybenzyl)-6-(D-ribitylimino)-5,6-dihydrouracil + S-adenosyl-L-methionine = 7,8-didemethyl-8-hydroxy-5-deazariboflavin + 5'-deoxyadenosine + L-methionine + NH4(+) + H(+). It functions in the pathway cofactor biosynthesis; coenzyme F0 biosynthesis. Functionally, catalyzes the radical-mediated synthesis of 7,8-didemethyl-8-hydroxy-5-deazariboflavin from 5-amino-5-(4-hydroxybenzyl)-6-(D-ribitylimino)-5,6-dihydrouracil. The sequence is that of 7,8-didemethyl-8-hydroxy-5-deazariboflavin synthase from Trichormus variabilis (strain ATCC 29413 / PCC 7937) (Anabaena variabilis).